Reading from the N-terminus, the 355-residue chain is Peptide chain release factor 1 (355 aa).

Glutamine 233 bears the N5-methylglutamine mark.

The protein belongs to the prokaryotic/mitochondrial release factor family. Post-translationally, methylated by PrmC. Methylation increases the termination efficiency of RF1.

It is found in the cytoplasm. Peptide chain release factor 1 directs the termination of translation in response to the peptide chain termination codons UAG and UAA. The polypeptide is Peptide chain release factor 1 (Syntrophobacter fumaroxidans (strain DSM 10017 / MPOB)).